Reading from the N-terminus, the 359-residue chain is Phosphoserine aminotransferase (359 aa).

Position 41 (Arg-41) interacts with L-glutamate. Pyridoxal 5'-phosphate contacts are provided by residues Ala-75–Ser-76, Trp-101, Thr-152, Asp-171, and Gln-194. Position 195 is an N6-(pyridoxal phosphate)lysine (Lys-195). Asn-236 to Thr-237 is a binding site for pyridoxal 5'-phosphate.

It belongs to the class-V pyridoxal-phosphate-dependent aminotransferase family. SerC subfamily. In terms of assembly, homodimer. Pyridoxal 5'-phosphate is required as a cofactor.

It localises to the cytoplasm. The catalysed reaction is O-phospho-L-serine + 2-oxoglutarate = 3-phosphooxypyruvate + L-glutamate. It carries out the reaction 4-(phosphooxy)-L-threonine + 2-oxoglutarate = (R)-3-hydroxy-2-oxo-4-phosphooxybutanoate + L-glutamate. It functions in the pathway amino-acid biosynthesis; L-serine biosynthesis; L-serine from 3-phospho-D-glycerate: step 2/3. The protein operates within cofactor biosynthesis; pyridoxine 5'-phosphate biosynthesis; pyridoxine 5'-phosphate from D-erythrose 4-phosphate: step 3/5. Catalyzes the reversible conversion of 3-phosphohydroxypyruvate to phosphoserine and of 3-hydroxy-2-oxo-4-phosphonooxybutanoate to phosphohydroxythreonine. The protein is Phosphoserine aminotransferase of Acinetobacter baylyi (strain ATCC 33305 / BD413 / ADP1).